Consider the following 250-residue polypeptide: Triosephosphate isomerase (250 aa).

10–12 contributes to the substrate binding site; that stretch reads NWK. Histidine 96 (electrophile) is an active-site residue. Catalysis depends on glutamate 168, which acts as the Proton acceptor. Substrate-binding positions include glycine 174, serine 214, and 235–236; that span reads GG.

It belongs to the triosephosphate isomerase family. As to quaternary structure, homodimer.

It is found in the cytoplasm. The enzyme catalyses D-glyceraldehyde 3-phosphate = dihydroxyacetone phosphate. Its pathway is carbohydrate biosynthesis; gluconeogenesis. The protein operates within carbohydrate degradation; glycolysis; D-glyceraldehyde 3-phosphate from glycerone phosphate: step 1/1. Functionally, involved in the gluconeogenesis. Catalyzes stereospecifically the conversion of dihydroxyacetone phosphate (DHAP) to D-glyceraldehyde-3-phosphate (G3P). In Streptococcus suis (strain 98HAH33), this protein is Triosephosphate isomerase.